The sequence spans 612 residues: Glutamine--fructose-6-phosphate aminotransferase [isomerizing] (612 aa).

Cys-2 acts as the Nucleophile; for GATase activity in catalysis. In terms of domain architecture, Glutamine amidotransferase type-2 spans 2 to 221 (CGIVGIVSQR…NGDIAEITNS (220 aa)). SIS domains are found at residues 289–429 (FNKT…IRKI) and 461–602 (LVKN…VDHP). Lys-607 acts as the For Fru-6P isomerization activity in catalysis.

Homodimer.

It localises to the cytoplasm. It carries out the reaction D-fructose 6-phosphate + L-glutamine = D-glucosamine 6-phosphate + L-glutamate. In terms of biological role, catalyzes the first step in hexosamine metabolism, converting fructose-6P into glucosamine-6P using glutamine as a nitrogen source. This chain is Glutamine--fructose-6-phosphate aminotransferase [isomerizing], found in Wigglesworthia glossinidia brevipalpis.